A 417-amino-acid chain; its full sequence is Serine hydroxymethyltransferase (417 aa).

(6S)-5,6,7,8-tetrahydrofolate is bound by residues Leu-121 and 125–127 (GHL). Position 229 is an N6-(pyridoxal phosphate)lysine (Lys-229). (6S)-5,6,7,8-tetrahydrofolate is bound at residue 355 to 357 (SPF).

Belongs to the SHMT family. As to quaternary structure, homodimer. Requires pyridoxal 5'-phosphate as cofactor.

It is found in the cytoplasm. The enzyme catalyses (6R)-5,10-methylene-5,6,7,8-tetrahydrofolate + glycine + H2O = (6S)-5,6,7,8-tetrahydrofolate + L-serine. The protein operates within one-carbon metabolism; tetrahydrofolate interconversion. Its pathway is amino-acid biosynthesis; glycine biosynthesis; glycine from L-serine: step 1/1. Its function is as follows. Catalyzes the reversible interconversion of serine and glycine with tetrahydrofolate (THF) serving as the one-carbon carrier. This reaction serves as the major source of one-carbon groups required for the biosynthesis of purines, thymidylate, methionine, and other important biomolecules. Also exhibits THF-independent aldolase activity toward beta-hydroxyamino acids, producing glycine and aldehydes, via a retro-aldol mechanism. The sequence is that of Serine hydroxymethyltransferase from Shewanella baltica (strain OS185).